The primary structure comprises 378 residues: Sphingosine 1-phosphate receptor 3 (378 aa).

Residues 1 to 40 are Extracellular-facing; that stretch reads MATALPPRLQPVRGNETLREHYQYVGKLAGRLKEASEGST. A glycan (N-linked (GlcNAc...) asparagine) is linked at Asn15. Residues 41–65 form a helical membrane-spanning segment; sequence LTTVLFLVICSFIVLENLMVLIAIW. The Cytoplasmic segment spans residues 66 to 72; sequence KNNKFHN. Residues 73–101 form a helical membrane-spanning segment; sequence RMYFFIGNLALCDLLAGIAYKVNILMSGK. Topologically, residues 102–115 are extracellular; that stretch reads KTFSLSPTVWFLRE. Residues 116–134 form a helical membrane-spanning segment; that stretch reads GSMFVALGASTCSLLAIAI. At 135–153 the chain is on the cytoplasmic side; the sequence is ERHLTMIKMRPYDANKRHR. Residues 154–179 form a helical membrane-spanning segment; that stretch reads VFLLIGMCWLIAFTLGALPILGWNCL. The Extracellular portion of the chain corresponds to 180–195; it reads HNLPDCSTILPLYSKK. The helical transmembrane segment at 196–216 threads the bilayer; it reads YIAFCISIFTAILVTIVILYA. The Cytoplasmic portion of the chain corresponds to 217 to 243; the sequence is RIYFLVKSSSRKVANHNNSERSMALLR. The chain crosses the membrane as a helical span at residues 244-265; that stretch reads TVVIVVSVFIACWSPLFILFLI. The Extracellular portion of the chain corresponds to 266–281; it reads DVACRVQACPILFKAQ. A helical membrane pass occupies residues 282-302; that stretch reads WFIVLAVLNSAMNPVIYTLAS. Residues 303–378 are Cytoplasmic-facing; that stretch reads KEMRRAFFRL…AALQNGIFCN (76 aa). Ser326 bears the Phosphoserine mark. Positions 327–357 are disordered; that stretch reads PIQPALDPSRSKSSSSNNSSHSPKVKEDLPH. Low complexity predominate over residues 337 to 348; it reads SKSSSSNNSSHS.

Belongs to the G-protein coupled receptor 1 family. As to expression, expressed in all tissues, but most abundantly in heart, placenta, kidney, and liver.

It localises to the cell membrane. Receptor for the lysosphingolipid sphingosine 1-phosphate (S1P). S1P is a bioactive lysophospholipid that elicits diverse physiological effect on most types of cells and tissues. When expressed in rat HTC4 hepatoma cells, is capable of mediating S1P-induced cell proliferation and suppression of apoptosis. The protein is Sphingosine 1-phosphate receptor 3 of Homo sapiens (Human).